The sequence spans 173 residues: Mesencephalic astrocyte-derived neurotrophic factor homolog (173 aa).

The first 22 residues, 1-22, serve as a signal peptide directing secretion; sequence MKTAHLVVVVCFLAGALQTAVA. Intrachain disulfides connect cysteine 28/cysteine 114, cysteine 31/cysteine 103, cysteine 61/cysteine 72, and cysteine 148/cysteine 151.

Belongs to the ARMET family.

The protein resides in the secreted. Its function is as follows. Required during the maturation of the embryonic nervous system for maintenance of neuronal and cuticular connectivity. Essential for maintenance of dopaminergic neurons and dopamine levels. In Drosophila ananassae (Fruit fly), this protein is Mesencephalic astrocyte-derived neurotrophic factor homolog.